A 232-amino-acid chain; its full sequence is uncharacterized protein (232 aa).

A helical transmembrane segment spans residues 10 to 32 (GLTIYLYPVIAWIILVTKIESGL).

Its subcellular location is the membrane. This is an uncharacterized protein from Archaeoglobus fulgidus (strain ATCC 49558 / DSM 4304 / JCM 9628 / NBRC 100126 / VC-16).